Here is a 132-residue protein sequence, read N- to C-terminus: Interleukin-4 (132 aa).

An N-terminal signal peptide occupies residues 1 to 24 (MGLTSQLIPTLVCLLALTSTFVHG). N-linked (GlcNAc...) asparagine glycans are attached at residues Asn28, Asn45, Asn62, Asn83, Asn95, and Asn101. 2 disulfide bridges follow: Cys48-Cys84 and Cys70-Cys104.

Belongs to the IL-4/IL-13 family.

Its subcellular location is the secreted. Functionally, participates in at least several B-cell activation processes as well as of other cell types. It is a costimulator of DNA-synthesis. It induces the expression of class II MHC molecules on resting B-cells. It enhances both secretion and cell surface expression of IgE and IgG1. It also regulates the expression of the low affinity Fc receptor for IgE (CD23) on both lymphocytes and monocytes. Positively regulates IL31RA expression in macrophages. Stimulates autophagy in dendritic cells by interfering with mTORC1 signaling and through the induction of RUFY4. This is Interleukin-4 (IL4) from Canis lupus familiaris (Dog).